The primary structure comprises 554 residues: Myo-inositol transporter 1 (554 aa).

The segment covering 1-13 has biased composition (polar residues); that stretch reads MGSSTNNTQSKAT. The tract at residues 1-57 is disordered; the sequence is MGSSTNNTQSKATPSVLENEVNSSKSSVVSSTSSAKGLLRETTNHGTMETSSVQISE. N-linked (GlcNAc...) asparagine glycosylation is found at asparagine 6 and asparagine 22. Positions 15 to 34 are enriched in low complexity; it reads SVLENEVNSSKSSVVSSTSS. Residues 44–57 are compositionally biased toward polar residues; it reads NHGTMETSSVQISE. 6 helical membrane-spanning segments follow: residues 65–85, 110–130, 144–164, 167–187, 196–216, and 227–247; these read MVLVLTLASSISGFMFGYDTG, FITSATSLGALLGAVVGGVLA, IIFVVGTIIQLAARTVWTMIA, FVLGWGVGIASLIAPLMISEL, LIVTNVIFITGGQLIAYFINW, and VSVGLCMVPPVLQFVLFWFLP. Asparagine 279 is a glycosylation site (N-linked (GlcNAc...) asparagine). A helical membrane pass occupies residues 313–332; sequence GNFRALILACGLQGIQQFTG. Asparagine 351 carries N-linked (GlcNAc...) asparagine glycosylation. Transmembrane regions (helical) follow at residues 354-374, 382-402, 420-440, 459-479, and 490-510; these read AVSIIIAATNFVFTGIAICII, ILLVGMPCMCISLIVCAVAFH, GWGIVVIIGMILYVASYAIGI, IGAMYAACTNWAGSLVIASTF, and GTFSFFAGLCFIAFFFVYFLL.

This sequence belongs to the major facilitator superfamily. Sugar transporter (TC 2.A.1.1) family.

The protein resides in the cell membrane. It catalyses the reaction myo-inositol(out) + H(+)(out) = myo-inositol(in) + H(+)(in). Major transporter for myo-inositol. This is Myo-inositol transporter 1 from Candida albicans (strain SC5314 / ATCC MYA-2876) (Yeast).